The primary structure comprises 287 residues: Inositol-1-monophosphatase (287 aa).

Residues Glu-79, Asp-96, Leu-98, and Asp-99 each coordinate Mg(2+). Residue Glu-79 participates in substrate binding. Residues 98–101 (LDGT), Arg-195, and Asp-224 each bind substrate. Residue Asp-224 participates in Mg(2+) binding.

Belongs to the inositol monophosphatase superfamily. Mg(2+) serves as cofactor.

The enzyme catalyses a myo-inositol phosphate + H2O = myo-inositol + phosphate. This Synechocystis sp. (strain ATCC 27184 / PCC 6803 / Kazusa) protein is Inositol-1-monophosphatase (suhB).